We begin with the raw amino-acid sequence, 230 residues long: Biosynthetic peptidoglycan transglycosylase (230 aa).

A helical membrane pass occupies residues 11 to 31; it reads VLLVLVALFVLYQLWIFTLVL.

This sequence belongs to the glycosyltransferase 51 family.

The protein resides in the cell inner membrane. The enzyme catalyses [GlcNAc-(1-&gt;4)-Mur2Ac(oyl-L-Ala-gamma-D-Glu-L-Lys-D-Ala-D-Ala)](n)-di-trans,octa-cis-undecaprenyl diphosphate + beta-D-GlcNAc-(1-&gt;4)-Mur2Ac(oyl-L-Ala-gamma-D-Glu-L-Lys-D-Ala-D-Ala)-di-trans,octa-cis-undecaprenyl diphosphate = [GlcNAc-(1-&gt;4)-Mur2Ac(oyl-L-Ala-gamma-D-Glu-L-Lys-D-Ala-D-Ala)](n+1)-di-trans,octa-cis-undecaprenyl diphosphate + di-trans,octa-cis-undecaprenyl diphosphate + H(+). It functions in the pathway cell wall biogenesis; peptidoglycan biosynthesis. Its function is as follows. Peptidoglycan polymerase that catalyzes glycan chain elongation from lipid-linked precursors. This is Biosynthetic peptidoglycan transglycosylase from Aromatoleum aromaticum (strain DSM 19018 / LMG 30748 / EbN1) (Azoarcus sp. (strain EbN1)).